A 171-amino-acid chain; its full sequence is UPF0260 protein Nham_1404 (171 aa).

Belongs to the UPF0260 family.

The sequence is that of UPF0260 protein Nham_1404 from Nitrobacter hamburgensis (strain DSM 10229 / NCIMB 13809 / X14).